Reading from the N-terminus, the 331-residue chain is Calcium-binding and coiled-coil domain-containing protein 2 (331 aa).

A CLIR motif is present at residues 128–131 (IMVV). A coiled-coil region spans residues 132–309 (INKEKVEEME…EKASWEKEKA (178 aa)). Residues 189–310 (KASWEKEKAS…KASWEKEKAP (122 aa)) form a disordered region. An LIR-like motif is present at residues 190–193 (ASWE). The tract at residues 292-302 (KEKASWEEEKA) is interaction with LGALS8.

This sequence belongs to the CALCOCO family. As to quaternary structure, dimer. Part of a complex consisting of CALCOCO2, TAX1BP1 and MYO6. Interacts with MYO6. Interacts with GEMIN4. Interacts with ATG8 family members MAP1LC3A, MAP1LC3B, GABARAP, GABARAPL1 and GABARAPL2. Interacts with ATG8 family member MAP1LC3C. Interacts with LGALS8. Interacts with TOM1; the interaction is indirect and is mediated by MYO6, which acts as a bridge between TOM1 and CALCOCO2. Interacts with AZI2.

The protein localises to the cytoplasm. The protein resides in the perinuclear region. It localises to the cytoskeleton. It is found in the cytoplasmic vesicle. Its subcellular location is the autophagosome membrane. In terms of biological role, xenophagy-specific receptor required for autophagy-mediated intracellular bacteria degradation. Acts as an effector protein of galectin-sensed membrane damage that restricts the proliferation of infecting pathogens upon entry into the cytosol by targeting LGALS8-associated bacteria for autophagy. Initially orchestrates bacteria targeting to autophagosomes and subsequently ensures pathogen degradation by regulating pathogen-containing autophagosome maturation. Bacteria targeting to autophagosomes relies on its interaction with MAP1LC3A, MAP1LC3B and/or GABARAPL2, whereas regulation of pathogen-containing autophagosome maturation requires the interaction with MAP3LC3C. May play a role in ruffle formation and actin cytoskeleton organization and seems to negatively regulate constitutive secretion. The protein is Calcium-binding and coiled-coil domain-containing protein 2 of Mus musculus (Mouse).